Reading from the N-terminus, the 384-residue chain is 4-hydroxy-3-methylbut-2-en-1-yl diphosphate synthase (flavodoxin) (384 aa).

[4Fe-4S] cluster is bound by residues C280, C283, C315, and E322.

It belongs to the IspG family. [4Fe-4S] cluster serves as cofactor.

It carries out the reaction (2E)-4-hydroxy-3-methylbut-2-enyl diphosphate + oxidized [flavodoxin] + H2O + 2 H(+) = 2-C-methyl-D-erythritol 2,4-cyclic diphosphate + reduced [flavodoxin]. It participates in isoprenoid biosynthesis; isopentenyl diphosphate biosynthesis via DXP pathway; isopentenyl diphosphate from 1-deoxy-D-xylulose 5-phosphate: step 5/6. Functionally, converts 2C-methyl-D-erythritol 2,4-cyclodiphosphate (ME-2,4cPP) into 1-hydroxy-2-methyl-2-(E)-butenyl 4-diphosphate. This chain is 4-hydroxy-3-methylbut-2-en-1-yl diphosphate synthase (flavodoxin), found in Parafrankia sp. (strain EAN1pec).